Here is a 540-residue protein sequence, read N- to C-terminus: Probable tubulin polyglutamylase TTLL2 (540 aa).

Residues 41 to 384 (LKPLVFRVDE…NGLRSEEKKC (344 aa)) form the TTL domain. Residues K169, 175–176 (RG), 197–200 (QKYI), and 210–212 (KCD) each bind ATP. R175 serves as a coordination point for a protein. R236 lines the L-glutamate pocket. Residue 255-256 (TN) participates in ATP binding. L-glutamate contacts are provided by S258 and K278. Residues D330, E343, and N345 each contribute to the Mg(2+) site. K361 contacts L-glutamate. The disordered stretch occupies residues 479–499 (SQSQPHKMKGPAGDLPEAGST).

The protein belongs to the tubulin--tyrosine ligase family. It depends on Mg(2+) as a cofactor. Highly expressed in brain, kidney, liver and testis. Expressed in heart, lung, muscle and spleen.

In terms of biological role, probable tubulin polyglutamylase that generates side chains of glutamate on the gamma-carboxyl group of specific glutamate residues within the C-terminal tail of target proteins. Similar to TTLL1, may acquire enzymatic activity only in complex with other proteins as it is most likely lacking domains important for autonomous activity. Probably involved in the side-chain initiation step of the polyglutamylation reaction rather than the elongation step. The chain is Probable tubulin polyglutamylase TTLL2 from Mus musculus (Mouse).